The sequence spans 506 residues: Galactose/methyl galactoside import ATP-binding protein MglA (506 aa).

ABC transporter domains are found at residues 14–249 (LEMS…VGRS) and 264–506 (VILE…SLHL). 46–53 (GENGAGKS) provides a ligand contact to ATP.

Belongs to the ABC transporter superfamily. Galactose/methyl galactoside importer (TC 3.A.1.2.3) family. In terms of assembly, the complex is composed of one ATP-binding protein (MglA), two transmembrane proteins (MglC) and a solute-binding protein (MglB).

The protein localises to the cell inner membrane. The catalysed reaction is D-galactose(out) + ATP + H2O = D-galactose(in) + ADP + phosphate + H(+). It catalyses the reaction methyl beta-D-galactoside(out) + ATP + H2O = methyl beta-D-galactoside(in) + ADP + phosphate + H(+). Functionally, part of the ABC transporter complex MglABC involved in galactose/methyl galactoside import. Responsible for energy coupling to the transport system. This is Galactose/methyl galactoside import ATP-binding protein MglA from Shigella boydii serotype 4 (strain Sb227).